The chain runs to 399 residues: 1-deoxy-D-xylulose 5-phosphate reductoisomerase (399 aa).

T11, G12, S13, I14, and N125 together coordinate NADPH. K126 contacts 1-deoxy-D-xylulose 5-phosphate. E127 is a binding site for NADPH. D151 provides a ligand contact to Mn(2+). Residues S152, E153, S186, and H209 each coordinate 1-deoxy-D-xylulose 5-phosphate. Residue E153 participates in Mn(2+) binding. G215 serves as a coordination point for NADPH. Residues S222, N227, K228, and E231 each contribute to the 1-deoxy-D-xylulose 5-phosphate site. E231 is a binding site for Mn(2+).

Belongs to the DXR family. Requires Mg(2+) as cofactor. It depends on Mn(2+) as a cofactor.

It carries out the reaction 2-C-methyl-D-erythritol 4-phosphate + NADP(+) = 1-deoxy-D-xylulose 5-phosphate + NADPH + H(+). The protein operates within isoprenoid biosynthesis; isopentenyl diphosphate biosynthesis via DXP pathway; isopentenyl diphosphate from 1-deoxy-D-xylulose 5-phosphate: step 1/6. Its function is as follows. Catalyzes the NADPH-dependent rearrangement and reduction of 1-deoxy-D-xylulose-5-phosphate (DXP) to 2-C-methyl-D-erythritol 4-phosphate (MEP). The sequence is that of 1-deoxy-D-xylulose 5-phosphate reductoisomerase from Acinetobacter baumannii (strain SDF).